Consider the following 381-residue polypeptide: MATNLRKTHPMMKIINNLVIDLPSPSNISAWWNFGSLLATCLALQIITGIFLAMHYSPDISMAFSSIAHITRDVQYGWLIRNMHANGASLFFMCIYLHIGRGIYYGSYLYKETWNTGIILLLLVMATAFVGYVLPWGQMSFWGATVITNLLSAIPYIGNTLVQWIWGGFSVDNATLTRFFTFHFLLPFAITGLTAVHLLFLHETGSNNPTGLNSNTDKIPFHPYFSYKDLLGLILMLTFLLTLTLFSPYLLGDPDNFTPANPLSTPPHIKPEWYFLFAYAILRSIPNKLGGVLALLFSILILFLMPTLHTSKQRTASFRPLTQILFWSLVADLLVLTWIGGQPVEDPFIIIGQVASTFYFLILLLLMPAAGMIENKMLNLK.

Helical transmembrane passes span 34 to 54 (FGSLLATCLALQIITGIFLAM), 78 to 99 (WLIRNMHANGASLFFMCIYLHI), 114 to 134 (WNTGIILLLLVMATAFVGYVL), and 179 to 199 (FFTFHFLLPFAITGLTAVHLL). Heme b contacts are provided by histidine 84 and histidine 98. Positions 183 and 197 each coordinate heme b. Residue histidine 202 participates in a ubiquinone binding. 4 helical membrane-spanning segments follow: residues 227–247 (YKDLLGLILMLTFLLTLTLFS), 289–309 (LGGVLALLFSILILFLMPTLH), 321–341 (LTQILFWSLVADLLVLTWIGG), and 348–368 (FIIIGQVASTFYFLILLLLMP).

Belongs to the cytochrome b family. In terms of assembly, the cytochrome bc1 complex contains 3 respiratory subunits (MT-CYB, CYC1 and UQCRFS1), 2 core proteins (UQCRC1 and UQCRC2) and probably 6 low-molecular weight proteins. Heme b serves as cofactor.

Its subcellular location is the mitochondrion inner membrane. Its function is as follows. Component of the ubiquinol-cytochrome c reductase complex (complex III or cytochrome b-c1 complex) that is part of the mitochondrial respiratory chain. The b-c1 complex mediates electron transfer from ubiquinol to cytochrome c. Contributes to the generation of a proton gradient across the mitochondrial membrane that is then used for ATP synthesis. This Chelonia mydas (Green sea-turtle) protein is Cytochrome b (MT-CYB).